Consider the following 466-residue polypeptide: Chromosomal replication initiator protein DnaA (466 aa).

Residues 1-85 (MSLSLWQHCL…FEVGNKPVSA (85 aa)) are domain I, interacts with DnaA modulators. Residues 82–122 (PVSARTTESVPKTVTHPAVNSTPTNSQPVRPSWDNQPQSQL) form a disordered region. A compositionally biased stretch (polar residues) spans 85-122 (ARTTESVPKTVTHPAVNSTPTNSQPVRPSWDNQPQSQL). The tract at residues 85–129 (ARTTESVPKTVTHPAVNSTPTNSQPVRPSWDNQPQSQLPELNYRS) is domain II. The interval 130 to 346 (NVNPKHKFDN…GALNRVIANA (217 aa)) is domain III, AAA+ region. ATP is bound by residues glycine 174, glycine 176, lysine 177, and threonine 178. The interval 347-466 (NFTGRAITID…FSNLIRTLSS (120 aa)) is domain IV, binds dsDNA.

It belongs to the DnaA family. As to quaternary structure, oligomerizes as a right-handed, spiral filament on DNA at oriC.

Its subcellular location is the cytoplasm. Plays an essential role in the initiation and regulation of chromosomal replication. ATP-DnaA binds to the origin of replication (oriC) to initiate formation of the DNA replication initiation complex once per cell cycle. Binds the DnaA box (a 9 base pair repeat at the origin) and separates the double-stranded (ds)DNA. Forms a right-handed helical filament on oriC DNA; dsDNA binds to the exterior of the filament while single-stranded (ss)DNA is stabiized in the filament's interior. The ATP-DnaA-oriC complex binds and stabilizes one strand of the AT-rich DNA unwinding element (DUE), permitting loading of DNA polymerase. After initiation quickly degrades to an ADP-DnaA complex that is not apt for DNA replication. Binds acidic phospholipids. This is Chromosomal replication initiator protein DnaA from Proteus mirabilis (strain HI4320).